Reading from the N-terminus, the 722-residue chain is Polyribonucleotide nucleotidyltransferase (722 aa).

Mg(2+)-binding residues include aspartate 495 and aspartate 501. The 60-residue stretch at 562 to 621 (PRLLSFRIDPELIGTVIGPGGRTIKGITERTNTKIDIEDGGIVTIASHDGAAAEEAQRII) folds into the KH domain. Residues 631 to 699 (GEIFPGSITR…NRGRINLTLR (69 aa)) form the S1 motif domain. The interval 700–722 (GVSQNGGMSNYPEPTPTPVAPLT) is disordered. Residues 712–722 (EPTPTPVAPLT) show a composition bias toward pro residues.

It belongs to the polyribonucleotide nucleotidyltransferase family. Requires Mg(2+) as cofactor.

The protein resides in the cytoplasm. It carries out the reaction RNA(n+1) + phosphate = RNA(n) + a ribonucleoside 5'-diphosphate. Functionally, involved in mRNA degradation. Catalyzes the phosphorolysis of single-stranded polyribonucleotides processively in the 3'- to 5'-direction. The protein is Polyribonucleotide nucleotidyltransferase of Prochlorococcus marinus (strain NATL2A).